The sequence spans 154 residues: Large ribosomal subunit protein uL30 (154 aa).

Positions Pro-114–Gly-139 are disordered. Residues His-119 to Lys-129 are compositionally biased toward basic residues.

It belongs to the universal ribosomal protein uL30 family. Part of the 50S ribosomal subunit.

The sequence is that of Large ribosomal subunit protein uL30 from Haloquadratum walsbyi (strain DSM 16790 / HBSQ001).